The following is a 314-amino-acid chain: Leucine-rich repeat-containing protein 59 (314 aa).

Residues 1–247 (MNKGKIENIK…VPKAKRSICS (247 aa)) lie on the Cytoplasmic side of the membrane. 5 LRR repeats span residues 14–35 (DGNELDLSLSNLTEVPVKELAA), 38–60 (KATFLDLSCNNLITLTPEFCSLT), 61–82 (HLIKIDLNKNQLVCLPEEIGQL), 84–106 (NLQHLDLYNNKLKMLPIGFSQLK), and 107–126 (SLKWLDLKDNPLEPTLAKAA). The stretch at 146–216 (MKVLQEEAEK…AVAAQEQQKK (71 aa)) forms a coiled coil. 2 disordered regions span residues 165–197 (REQEKKKEAKQREKEAREKEAQKKKKAEEKERK) and 212–237 (EQQKKKKEEKKKKAAQNQGKKAAPES). Basic residues predominate over residues 215–225 (KKKKEEKKKKA). A helical membrane pass occupies residues 248-268 (LFFSLLLKLVLLLVIGVSSVV). Residues 269-314 (AVCQLTELRKEAFCIPLNVHFEETVRWAQGLDVVQQVIQKMSDLRT) lie on the Lumenal side of the membrane.

In terms of assembly, interacts with SGO1.

Its subcellular location is the microsome membrane. The protein localises to the endoplasmic reticulum membrane. The protein resides in the nucleus envelope. Functionally, required for nuclear import of FGF1. The sequence is that of Leucine-rich repeat-containing protein 59 (lrrc59) from Danio rerio (Zebrafish).